A 582-amino-acid polypeptide reads, in one-letter code: Potassium-transporting ATPase potassium-binding subunit (582 aa).

The next 11 helical transmembrane spans lie at 6–26 (LVQL…LGLY), 65–85 (IYAL…YVLE), 87–107 (LQGG…FVAV), 136–156 (GLAV…VALI), 178–198 (VLYI…WQGV), 277–297 (LEML…GVMI), 304–324 (LAIL…TLAA), 402–422 (GLYG…LMVG), 441–461 (ALVI…AAVI), 505–525 (IAGA…VLAL), and 546–566 (GGIF…LTFV).

The protein belongs to the KdpA family. As to quaternary structure, the system is composed of three essential subunits: KdpA, KdpB and KdpC.

The protein localises to the cell inner membrane. Its function is as follows. Part of the high-affinity ATP-driven potassium transport (or Kdp) system, which catalyzes the hydrolysis of ATP coupled with the electrogenic transport of potassium into the cytoplasm. This subunit binds the periplasmic potassium ions and delivers the ions to the membrane domain of KdpB through an intramembrane tunnel. This Solidesulfovibrio magneticus (strain ATCC 700980 / DSM 13731 / RS-1) (Desulfovibrio magneticus) protein is Potassium-transporting ATPase potassium-binding subunit.